The chain runs to 229 residues: UPF0173 metal-dependent hydrolase RD1_1994 (229 aa).

It belongs to the UPF0173 family.

The protein is UPF0173 metal-dependent hydrolase RD1_1994 of Roseobacter denitrificans (strain ATCC 33942 / OCh 114) (Erythrobacter sp. (strain OCh 114)).